We begin with the raw amino-acid sequence, 181 residues long: MNTDSLALIKQSIKTIPDYPKAGIMFRDVTSLLEDHTAYQTAMKLLVERYKDSGFTKVVGTESRGFLFGAPLALELGVGFVPVRKPGKLPRETISESYELEYGHDTLEIHVDAIKAGDKVLVIDDLLATGGTIEATVKLIRRLGGDVAHAAFVISLPDLGGEKRLQAMGLEICKLCEFEGD.

Belongs to the purine/pyrimidine phosphoribosyltransferase family. As to quaternary structure, homodimer.

The protein localises to the cytoplasm. The enzyme catalyses AMP + diphosphate = 5-phospho-alpha-D-ribose 1-diphosphate + adenine. It participates in purine metabolism; AMP biosynthesis via salvage pathway; AMP from adenine: step 1/1. Its function is as follows. Catalyzes a salvage reaction resulting in the formation of AMP, that is energically less costly than de novo synthesis. The polypeptide is Adenine phosphoribosyltransferase (Shewanella amazonensis (strain ATCC BAA-1098 / SB2B)).